The following is a 152-amino-acid chain: Small ribosomal subunit protein uS19 (152 aa).

This sequence belongs to the universal ribosomal protein uS19 family.

The protein is Small ribosomal subunit protein uS19 (RPS15) of Podospora anserina (Pleurage anserina).